The sequence spans 90 residues: Small ribosomal subunit protein bS20 (90 aa).

This sequence belongs to the bacterial ribosomal protein bS20 family.

Its function is as follows. Binds directly to 16S ribosomal RNA. This chain is Small ribosomal subunit protein bS20, found in Acidiphilium cryptum (strain JF-5).